Reading from the N-terminus, the 327-residue chain is MMSGRPLHMETPVRDSMTLSKVAGTTAYLKLDSAQPSGSFKIRGIGHLCKMWAERGCEHFVCSSAGNAGMAAAYAARKLGIPSTIVVPSTTPALTIQRLKNEGATVKVVGETLDEAIRVAKDLEKNNSGWVYVPPFDDPLIWEGHSSIVKELKETMTEKPGAIVLAVGGGGLLCGVVQGLAEVGWRDVPVITMETIGAESFHASTKAGKLVTLPCITSVAKALGVTTVAAQAMKVYREHPIFSEVVSDQEAVAALEKFVDDEKILVEPACGAALAAVYSNVIQKLQGEGKLRTPLSSLVVIVCGGSNISLAQLVALKKQLGMDGLSQ.

K41 is modified (N6-(pyridoxal phosphate)lysine).

The protein belongs to the serine/threonine dehydratase family. Homodimer. Pyridoxal 5'-phosphate serves as cofactor.

The protein localises to the cytoplasm. It carries out the reaction L-serine = pyruvate + NH4(+). The enzyme catalyses L-threonine = 2-oxobutanoate + NH4(+). It participates in carbohydrate biosynthesis; gluconeogenesis. Its function is as follows. Catalyzes the pyridoxal-phosphate-dependent dehydrative deamination of L-threonine and L-serine to ammonia and alpha-ketobutyrate and pyruvate, respectively. In Bos taurus (Bovine), this protein is L-serine dehydratase/L-threonine deaminase (SDS).